A 381-amino-acid chain; its full sequence is Cytochrome b (381 aa).

4 helical membrane-spanning segments follow: residues 31–51 (FGFL…FLAM), 75–97 (WLLR…IHIF), 112–132 (VWVI…IGYV), and 178–198 (FFSL…VHLA). His-81 and His-95 together coordinate heme b. Positions 182 and 196 each coordinate heme b. His-201 lines the a ubiquinone pocket. 4 helical membrane passes run 224-244 (FIVK…IFVY), 288-308 (LGGV…PWIH), 320-340 (LYRL…WIGG), and 347-367 (YVII…ILLP).

This sequence belongs to the cytochrome b family. The main subunits of complex b-c1 are: cytochrome b, cytochrome c1 and the Rieske protein. The cofactor is heme b.

It is found in the mitochondrion inner membrane. In terms of biological role, component of the ubiquinol-cytochrome c reductase complex (complex III or cytochrome b-c1 complex) that is part of the mitochondrial respiratory chain. The b-c1 complex mediates electron transfer from ubiquinol to cytochrome c. Contributes to the generation of a proton gradient across the mitochondrial membrane that is then used for ATP synthesis. The polypeptide is Cytochrome b (MT-CYB) (Chondrus crispus (Carrageen Irish moss)).